We begin with the raw amino-acid sequence, 96 residues long: MFKALIVALAAVAAAIPTQQPSSNEMNCDSGVYCCNKVAQNTGIVVPIDALSSTCGDTLKLVTVDALNDKCTSQTVCCNNVQQNGLVNVACTPIDV.

Residues 1–15 (MFKALIVALAAVAAA) form the signal peptide. 4 disulfides stabilise this stretch: cysteine 28–cysteine 77, cysteine 34–cysteine 71, cysteine 35–cysteine 55, and cysteine 78–cysteine 91.

This sequence belongs to the fungal hydrophobin family.

Its subcellular location is the secreted. The protein resides in the cell wall. In terms of biological role, aerial growth, conidiation, and dispersal of filamentous fungi in the environment rely upon a capability of their secreting small amphipathic proteins called hydrophobins (HPBs) with low sequence identity. Class I can self-assemble into an outermost layer of rodlet bundles on aerial cell surfaces, conferring cellular hydrophobicity that supports fungal growth, development and dispersal; whereas Class II form highly ordered films at water-air interfaces through intermolecular interactions but contribute nothing to the rodlet structure. Hyd2 plays a neglectable role in hyphal growth and asexual development and does not seem involved in cellular hydrophobicity, conidial adhesion, stress tolerance nor insect pathogenicity. This is Class I hydrophobin 2 from Metarhizium robertsii (strain ARSEF 23 / ATCC MYA-3075) (Metarhizium anisopliae (strain ARSEF 23)).